A 131-amino-acid chain; its full sequence is Glycine cleavage system H protein (131 aa).

A Lipoyl-binding domain is found at 24–106; that stretch reads VYCVGITEHA…YTDGWLFKIK (83 aa). K65 carries the N6-lipoyllysine modification.

It belongs to the GcvH family. The glycine cleavage system is composed of four proteins: P, T, L and H. It depends on (R)-lipoate as a cofactor.

Its function is as follows. The glycine cleavage system catalyzes the degradation of glycine. The H protein shuttles the methylamine group of glycine from the P protein to the T protein. The polypeptide is Glycine cleavage system H protein (Sodalis glossinidius (strain morsitans)).